The primary structure comprises 139 residues: uncharacterized protein (139 aa).

Residues Met1–His62 form the HTH asnC-type domain. The segment at residues Met20–Arg39 is a DNA-binding region (H-T-H motif).

This is an uncharacterized protein from Bacillus subtilis (strain 168).